The following is a 176-amino-acid chain: Large ribosomal subunit protein bL19 (176 aa).

Belongs to the bacterial ribosomal protein bL19 family.

Its function is as follows. This protein is located at the 30S-50S ribosomal subunit interface and may play a role in the structure and function of the aminoacyl-tRNA binding site. The protein is Large ribosomal subunit protein bL19 of Sinorhizobium fredii (strain NBRC 101917 / NGR234).